The sequence spans 121 residues: UPF0231 protein ESA_03214 (121 aa).

It belongs to the UPF0231 family.

This Cronobacter sakazakii (strain ATCC BAA-894) (Enterobacter sakazakii) protein is UPF0231 protein ESA_03214.